Reading from the N-terminus, the 243-residue chain is Uridylate kinase (243 aa).

An ATP-binding site is contributed by 12–15 (KLSG). Gly-54 provides a ligand contact to UMP. Residues Gly-55 and Arg-59 each contribute to the ATP site. 135-142 (TGNPYFTT) is a UMP binding site. ATP is bound by residues Asn-163, Tyr-169, and Asp-172.

The protein belongs to the UMP kinase family. In terms of assembly, homohexamer.

Its subcellular location is the cytoplasm. The enzyme catalyses UMP + ATP = UDP + ADP. It functions in the pathway pyrimidine metabolism; CTP biosynthesis via de novo pathway; UDP from UMP (UMPK route): step 1/1. Inhibited by UTP. In terms of biological role, catalyzes the reversible phosphorylation of UMP to UDP. The chain is Uridylate kinase from Roseiflexus sp. (strain RS-1).